A 275-amino-acid polypeptide reads, in one-letter code: Biotin synthase (275 aa).

The Radical SAM core domain maps to 1–217; sequence MLCAICNVSS…DTAKTLPQCR (217 aa). The [4Fe-4S] cluster site is built by Cys-13, Cys-17, and Cys-20. The [2Fe-2S] cluster site is built by Cys-57, Cys-92, Cys-150, and Arg-217.

The protein belongs to the radical SAM superfamily. Biotin synthase family. As to quaternary structure, homodimer. [4Fe-4S] cluster is required as a cofactor. It depends on [2Fe-2S] cluster as a cofactor.

The catalysed reaction is (4R,5S)-dethiobiotin + (sulfur carrier)-SH + 2 reduced [2Fe-2S]-[ferredoxin] + 2 S-adenosyl-L-methionine = (sulfur carrier)-H + biotin + 2 5'-deoxyadenosine + 2 L-methionine + 2 oxidized [2Fe-2S]-[ferredoxin]. Its pathway is cofactor biosynthesis; biotin biosynthesis; biotin from 7,8-diaminononanoate: step 2/2. Its function is as follows. Catalyzes the conversion of dethiobiotin (DTB) to biotin by the insertion of a sulfur atom into dethiobiotin via a radical-based mechanism. This Campylobacter fetus subsp. fetus (strain 82-40) protein is Biotin synthase.